A 1170-amino-acid chain; its full sequence is Putative DNA topoisomerase 2, mitochondrial (1170 aa).

ATP is bound by residues asparagine 106, asparagine 135, 163 to 165, 176 to 183, and 396 to 398; these read SSN, GRNGYGAK, and QTK. A Toprim domain is found at 475 to 590; the sequence is CTLILTEGDS…SLVHTDGFIQ (116 aa). Mg(2+) contacts are provided by glutamate 481, aspartate 559, and aspartate 561. The Topo IIA-type catalytic domain occupies 722 to 1157; the sequence is IPSLIDGLKP…DWKSVWRSEL (436 aa). Tyrosine 813 (O-(5'-phospho-DNA)-tyrosine intermediate) is an active-site residue.

Belongs to the type II topoisomerase family. As to quaternary structure, homodimer. Mg(2+) is required as a cofactor. The cofactor is Mn(2+). Requires Ca(2+) as cofactor.

Its subcellular location is the mitochondrion. It carries out the reaction ATP-dependent breakage, passage and rejoining of double-stranded DNA.. Functionally, control of topological states of DNA by transient breakage and subsequent rejoining of DNA strands. Topoisomerase II makes double-strand breaks. The polypeptide is Putative DNA topoisomerase 2, mitochondrial (Caenorhabditis elegans).